The following is a 476-amino-acid chain: Bifunctional protein HldE (476 aa).

A ribokinase region spans residues 1 to 320; the sequence is MQNPHIPSFA…RAVHQEGGSG (320 aa). 196–199 lines the ATP pocket; the sequence is NLSE. D265 is an active-site residue. The segment at 345 to 476 is cytidylyltransferase; sequence FTNGCFDIIH…KIVERIREKD (132 aa).

In the N-terminal section; belongs to the carbohydrate kinase PfkB family. This sequence in the C-terminal section; belongs to the cytidylyltransferase family. Homodimer.

It carries out the reaction D-glycero-beta-D-manno-heptose 7-phosphate + ATP = D-glycero-beta-D-manno-heptose 1,7-bisphosphate + ADP + H(+). The enzyme catalyses D-glycero-beta-D-manno-heptose 1-phosphate + ATP + H(+) = ADP-D-glycero-beta-D-manno-heptose + diphosphate. The protein operates within nucleotide-sugar biosynthesis; ADP-L-glycero-beta-D-manno-heptose biosynthesis; ADP-L-glycero-beta-D-manno-heptose from D-glycero-beta-D-manno-heptose 7-phosphate: step 1/4. It functions in the pathway nucleotide-sugar biosynthesis; ADP-L-glycero-beta-D-manno-heptose biosynthesis; ADP-L-glycero-beta-D-manno-heptose from D-glycero-beta-D-manno-heptose 7-phosphate: step 3/4. Functionally, catalyzes the phosphorylation of D-glycero-D-manno-heptose 7-phosphate at the C-1 position to selectively form D-glycero-beta-D-manno-heptose-1,7-bisphosphate. In terms of biological role, catalyzes the ADP transfer from ATP to D-glycero-beta-D-manno-heptose 1-phosphate, yielding ADP-D-glycero-beta-D-manno-heptose. This chain is Bifunctional protein HldE, found in Alcanivorax borkumensis (strain ATCC 700651 / DSM 11573 / NCIMB 13689 / SK2).